The following is a 469-amino-acid chain: UDP-N-acetylmuramate--L-alanine ligase (469 aa).

Residue 118–124 (GTHGKTT) coordinates ATP.

This sequence belongs to the MurCDEF family.

The protein resides in the cytoplasm. It catalyses the reaction UDP-N-acetyl-alpha-D-muramate + L-alanine + ATP = UDP-N-acetyl-alpha-D-muramoyl-L-alanine + ADP + phosphate + H(+). It participates in cell wall biogenesis; peptidoglycan biosynthesis. In terms of biological role, cell wall formation. The sequence is that of UDP-N-acetylmuramate--L-alanine ligase from Ruegeria sp. (strain TM1040) (Silicibacter sp.).